A 274-amino-acid polypeptide reads, in one-letter code: 3-methyl-2-oxobutanoate hydroxymethyltransferase (274 aa).

Mg(2+) contacts are provided by Asp49 and Asp88. Residues 49–50 (DS), Asp88, and Lys118 contribute to the 3-methyl-2-oxobutanoate site. Glu120 lines the Mg(2+) pocket. Glu187 acts as the Proton acceptor in catalysis.

This sequence belongs to the PanB family. As to quaternary structure, homodecamer; pentamer of dimers. Mg(2+) is required as a cofactor.

Its subcellular location is the cytoplasm. It carries out the reaction 3-methyl-2-oxobutanoate + (6R)-5,10-methylene-5,6,7,8-tetrahydrofolate + H2O = 2-dehydropantoate + (6S)-5,6,7,8-tetrahydrofolate. Its pathway is cofactor biosynthesis; (R)-pantothenate biosynthesis; (R)-pantoate from 3-methyl-2-oxobutanoate: step 1/2. Functionally, catalyzes the reversible reaction in which hydroxymethyl group from 5,10-methylenetetrahydrofolate is transferred onto alpha-ketoisovalerate to form ketopantoate. This Rhodopseudomonas palustris (strain BisB5) protein is 3-methyl-2-oxobutanoate hydroxymethyltransferase.